The sequence spans 128 residues: NADH-quinone oxidoreductase subunit A (128 aa).

3 helical membrane passes run 5–25, 72–92, and 100–120; these read IPILVLAALAAAFAVVSVVIA, LTAMLFIVFDIEIVFLYPWAV, and FALVEMAIFMLTVFVAYAYVW.

The protein belongs to the complex I subunit 3 family. NDH-1 is composed of 14 different subunits. Subunits NuoA, H, J, K, L, M, N constitute the membrane sector of the complex.

The protein localises to the cell membrane. The catalysed reaction is a quinone + NADH + 5 H(+)(in) = a quinol + NAD(+) + 4 H(+)(out). NDH-1 shuttles electrons from NADH, via FMN and iron-sulfur (Fe-S) centers, to quinones in the respiratory chain. The immediate electron acceptor for the enzyme in this species is believed to be a menaquinone. Couples the redox reaction to proton translocation (for every two electrons transferred, four hydrogen ions are translocated across the cytoplasmic membrane), and thus conserves the redox energy in a proton gradient. In Mycobacterium bovis (strain ATCC BAA-935 / AF2122/97), this protein is NADH-quinone oxidoreductase subunit A.